Consider the following 155-residue polypeptide: DNA-directed RNA polymerase II subunit rpb4 (155 aa).

The protein belongs to the eukaryotic RPB4 RNA polymerase subunit family. As to quaternary structure, component of the RNA polymerase II (Pol II) complex consisting of 12 subunits. RPB4 and RPB7 form a subcomplex that protrudes from the 10-subunit Pol II core complex.

It is found in the nucleus. In terms of biological role, DNA-dependent RNA polymerase catalyzes the transcription of DNA into RNA using the four ribonucleoside triphosphates as substrates. Component of RNA polymerase II which synthesizes mRNA precursors and many functional non-coding RNAs. Pol II is the central component of the basal RNA polymerase II transcription machinery. It is composed of mobile elements that move relative to each other. RPB4 is part of a subcomplex with RPB7 that binds to a pocket formed by RPB1, RPB2 and RPB6 at the base of the clamp element. The RPB4-RPB7 subcomplex seems to lock the clamp via RPB7 in the closed conformation thus preventing double-stranded DNA to enter the active site cleft. The RPB4-RPB7 subcomplex binds single-stranded DNA and RNA. In Dictyostelium discoideum (Social amoeba), this protein is DNA-directed RNA polymerase II subunit rpb4 (polr2d).